The sequence spans 157 residues: 2-C-methyl-D-erythritol 2,4-cyclodiphosphate synthase (157 aa).

2 residues coordinate a divalent metal cation: aspartate 8 and histidine 10. Residues aspartate 8–histidine 10 and histidine 34–serine 35 each bind 4-CDP-2-C-methyl-D-erythritol 2-phosphate. A divalent metal cation is bound at residue histidine 42. 4-CDP-2-C-methyl-D-erythritol 2-phosphate contacts are provided by residues aspartate 56–glycine 58, threonine 132–glutamate 135, and arginine 142.

Belongs to the IspF family. Homotrimer. A divalent metal cation is required as a cofactor.

It carries out the reaction 4-CDP-2-C-methyl-D-erythritol 2-phosphate = 2-C-methyl-D-erythritol 2,4-cyclic diphosphate + CMP. It functions in the pathway isoprenoid biosynthesis; isopentenyl diphosphate biosynthesis via DXP pathway; isopentenyl diphosphate from 1-deoxy-D-xylulose 5-phosphate: step 4/6. Its function is as follows. Involved in the biosynthesis of isopentenyl diphosphate (IPP) and dimethylallyl diphosphate (DMAPP), two major building blocks of isoprenoid compounds. Catalyzes the conversion of 4-diphosphocytidyl-2-C-methyl-D-erythritol 2-phosphate (CDP-ME2P) to 2-C-methyl-D-erythritol 2,4-cyclodiphosphate (ME-CPP) with a corresponding release of cytidine 5-monophosphate (CMP). In Pelodictyon phaeoclathratiforme (strain DSM 5477 / BU-1), this protein is 2-C-methyl-D-erythritol 2,4-cyclodiphosphate synthase.